The sequence spans 315 residues: tRNA dimethylallyltransferase (315 aa).

10–17 (GPTAVGKT) is a binding site for ATP. Substrate is bound at residue 12-17 (TAVGKT). An interaction with substrate tRNA region spans residues 35–38 (DSMQ).

It belongs to the IPP transferase family. In terms of assembly, monomer. The cofactor is Mg(2+).

It catalyses the reaction adenosine(37) in tRNA + dimethylallyl diphosphate = N(6)-dimethylallyladenosine(37) in tRNA + diphosphate. Catalyzes the transfer of a dimethylallyl group onto the adenine at position 37 in tRNAs that read codons beginning with uridine, leading to the formation of N6-(dimethylallyl)adenosine (i(6)A). This is tRNA dimethylallyltransferase from Geobacillus kaustophilus (strain HTA426).